A 531-amino-acid polypeptide reads, in one-letter code: UDP-glucuronosyltransferase 2B13 (531 aa).

The signal sequence occupies residues 1 to 24 (MPVKCISVLLLLLQLSCCFSSGSC). N-linked (GlcNAc...) asparagine glycans are attached at residues asparagine 69, asparagine 101, and asparagine 317. The helical transmembrane segment at 495–511 (VIGFLLACVAITTYLIV) threads the bilayer.

Belongs to the UDP-glycosyltransferase family.

Its subcellular location is the microsome membrane. The protein localises to the endoplasmic reticulum membrane. It carries out the reaction glucuronate acceptor + UDP-alpha-D-glucuronate = acceptor beta-D-glucuronoside + UDP + H(+). UDPGT is of major importance in the conjugation and subsequent elimination of potentially toxic xenobiotics and endogenous compounds. Acts on small phenolic agents such as 2-beta-naphthol and 4-methylumbelliferone as well as bulky phenolic compounds like 2-hydroxy- and 4-hydroxybiphenyl. In contrast to 2B16 it is active toward octylgallate. The sequence is that of UDP-glucuronosyltransferase 2B13 (UGT2B13) from Oryctolagus cuniculus (Rabbit).